The chain runs to 346 residues: Cyclin-dependent kinase 20 (346 aa).

Positions 4–288 constitute a Protein kinase domain; that stretch reads YCILGRIGEG…ASQALLHQYF (285 aa). ATP is bound by residues 10–18 and lysine 33; that span reads IGEGAHGIV. The active-site Proton acceptor is aspartate 127. The disordered stretch occupies residues 298–324; the sequence is SELPIPQRPGGPTPKAHPGPPHVHDFH. Over residues 303-318 the composition is skewed to pro residues; that stretch reads PQRPGGPTPKAHPGPP.

Belongs to the protein kinase superfamily. CMGC Ser/Thr protein kinase family. CDC2/CDKX subfamily. In terms of assembly, monomer. Interacts with TBC1D32 and MAK.

The protein localises to the nucleus. It is found in the cytoplasm. Its subcellular location is the cell projection. The protein resides in the cilium. The enzyme catalyses L-seryl-[protein] + ATP = O-phospho-L-seryl-[protein] + ADP + H(+). The catalysed reaction is L-threonyl-[protein] + ATP = O-phospho-L-threonyl-[protein] + ADP + H(+). In terms of biological role, required for high-level Shh responses in the developing neural tube. Together with TBC1D32, controls the structure of the primary cilium by coordinating assembly of the ciliary membrane and axoneme, allowing GLI2 to be properly activated in response to SHH signaling. Involved in cell growth. Activates CDK2, a kinase involved in the control of the cell cycle, by phosphorylating residue 'Thr-160'. The protein is Cyclin-dependent kinase 20 (Cdk20) of Rattus norvegicus (Rat).